The sequence spans 101 residues: DET1- and DDB1-associated protein 1 (101 aa).

The disordered stretch occupies residues 67-101 (NAAKKRDQDQLEIGETSAPPRKIARTDSQEMSEDT).

The protein belongs to the DDA1 family. In terms of assembly, component of numerous DCX (DDB1-CUL4-X-box) E3 ubiquitin-protein ligase complexes which consist of a core of DDB1, cullin-4 (CUL4A or CUL4B), DDA1 and RBX1.

It participates in protein modification; protein ubiquitination. In terms of biological role, functions as a component of numerous distinct DCX (DDB1-CUL4-X-box) E3 ubiquitin-protein ligase complexes which mediate the ubiquitination and subsequent proteasomal degradation of target proteins. In the DCX complexes, acts as a scaffolding subunit required to stabilize the complex. In Xenopus tropicalis (Western clawed frog), this protein is DET1- and DDB1-associated protein 1.